Here is a 288-residue protein sequence, read N- to C-terminus: Protease HtpX homolog (288 aa).

The next 2 membrane-spanning stretches (helical) occupy residues threonine 7 to glycine 27 and glutamine 29 to serine 49. Residue histidine 131 participates in Zn(2+) binding. The active site involves glutamate 132. Histidine 135 contributes to the Zn(2+) binding site. A run of 2 helical transmembrane segments spans residues isoleucine 141–alanine 161 and isoleucine 177–isoleucine 197. Position 202 (glutamate 202) interacts with Zn(2+).

This sequence belongs to the peptidase M48B family. The cofactor is Zn(2+).

It is found in the cell inner membrane. The protein is Protease HtpX homolog of Polynucleobacter necessarius subsp. necessarius (strain STIR1).